Here is a 162-residue protein sequence, read N- to C-terminus: Caveolin-2 (162 aa).

At 1 to 86 (MGLETEKADV…FEISKYVLYK (86 aa)) the chain is on the cytoplasmic side. Tyr-19 is subject to Phosphotyrosine; by SRC. Ser-20 and Ser-23 each carry phosphoserine. The residue at position 27 (Tyr-27) is a Phosphotyrosine; by SRC. Ser-36 carries the phosphoserine modification. Positions 87 to 107 (FLTVFLAIPLAFVAGILFATL) form an intramembrane region, helical. The Cytoplasmic segment spans residues 108-162 (SCLHIWIIMPFVKTCLMVLPSVQTIWKSVTDVIIAPLCTSVGRSFSSISLRLSQD).

The protein belongs to the caveolin family. Monomer or homodimer. Interacts with CAV1; the interaction forms a stable heterooligomeric complex that is required for targeting to lipid rafts and for caveolae formation. Tyrosine phosphorylated forms do not form heterooligomers with the Tyr-19-phosphorylated form existing as a monomer or dimer, and the Tyr-27-form as a monomer only. Interacts (tyrosine phosphorylated form) with the SH2 domain-containing proteins, RASA1, NCK1 and SRC. Interacts (tyrosine phosphorylated form) with INSR, the interaction (Tyr-27-phosphorylated form) is increased on insulin stimulation. Interacts (Tyr-19 phosphorylated form) with MAPK1 (phosphorylated form); the interaction, promoted by insulin, leads to nuclear location and MAPK1 activation. Interacts with STAT3; the interaction is increased on insulin-induced tyrosine phosphorylation leading to STAT activation. Phosphorylated on serine and tyrosine residues. CAV1 promotes phosphorylation on Ser-23 which then targets the complex to the plasma membrane, lipid rafts and caveolae. Phosphorylation on Ser-36 appears to modulate mitosis in endothelial cells. Phosphorylation on both Tyr-19 and Tyr-27 is required for insulin-induced 'Ser-727' phosphorylation of STAT3 and its activation. Phosphorylation on Tyr-19 is required for insulin-induced phosphorylation of MAPK1 and DNA binding of STAT3. Tyrosine phosphorylation is induced by both EGF and insulin (By. similarity).

The protein localises to the nucleus. It localises to the cytoplasm. The protein resides in the golgi apparatus membrane. Its subcellular location is the cell membrane. It is found in the membrane. The protein localises to the caveola. In terms of biological role, may act as a scaffolding protein within caveolar membranes. Interacts directly with G-protein alpha subunits and can functionally regulate their activity. Acts as an accessory protein in conjunction with CAV1 in targeting to lipid rafts and driving caveolae formation. The Ser-36 phosphorylated form has a role in modulating mitosis in endothelial cells. Positive regulator of cellular mitogenesis of the MAPK signaling pathway. Required for the insulin-stimulated nuclear translocation and activation of MAPK1 and STAT3, and the subsequent regulation of cell cycle progression. The sequence is that of Caveolin-2 (CAV2) from Otolemur garnettii (Small-eared galago).